A 294-amino-acid polypeptide reads, in one-letter code: 4-diphosphocytidyl-2-C-methyl-D-erythritol kinase (294 aa).

The active site involves lysine 11. 93 to 103 contributes to the ATP binding site; it reads PFGAGLGGGSS. Residue aspartate 135 is part of the active site.

It belongs to the GHMP kinase family. IspE subfamily.

It catalyses the reaction 4-CDP-2-C-methyl-D-erythritol + ATP = 4-CDP-2-C-methyl-D-erythritol 2-phosphate + ADP + H(+). Its pathway is isoprenoid biosynthesis; isopentenyl diphosphate biosynthesis via DXP pathway; isopentenyl diphosphate from 1-deoxy-D-xylulose 5-phosphate: step 3/6. In terms of biological role, catalyzes the phosphorylation of the position 2 hydroxy group of 4-diphosphocytidyl-2C-methyl-D-erythritol. In Chlorobium phaeobacteroides (strain DSM 266 / SMG 266 / 2430), this protein is 4-diphosphocytidyl-2-C-methyl-D-erythritol kinase.